Here is a 767-residue protein sequence, read N- to C-terminus: Protein hunchback (767 aa).

Disordered regions lie at residues 30 to 51, 105 to 127, and 174 to 212; these read EPGH…PIPS, QQQY…HLMG, and EKLQ…SNSS. The segment covering 39-51 has biased composition (polar residues); it reads SVASSPRQSPIPS. Over residues 105–117 the composition is skewed to low complexity; that stretch reads QQQYQQHFQAAQQ. A compositionally biased stretch (basic and acidic residues) spans 200–212; the sequence is EPEKEHDQMSNSS. 4 consecutive C2H2-type zinc fingers follow at residues 242-264, 271-293, 299-321, and 327-351; these read YKCK…TRTH, LQCP…IRKH, FQCD…RKSH, and YRCA…KYGH. Disordered regions lie at residues 357 to 424, 518 to 570, and 610 to 704; these read LDED…TSQL, QLQQ…QPQQ, and GVMT…APPS. Positions 386-397 are enriched in gly residues; that stretch reads IASGGSGSGSGS. Positions 518-527 are enriched in low complexity; it reads QLQQQNQQQS. The span at 528 to 537 shows a compositional bias: acidic residues; the sequence is DNEEEEQDDE. Over residues 661–704 the composition is skewed to low complexity; it reads ANTSASSTASSSGNSSNASSNSNGNSSSNSSSSGTNSAAAAPPS. 2 consecutive C2H2-type zinc fingers follow at residues 714–736 and 742–766; these read YECK…MGYH and FKCN…RNAH.

The protein belongs to the hunchback C2H2-type zinc-finger protein family.

It is found in the nucleus. Gap class segmentation protein that controls development of head structures. The protein is Protein hunchback (hb) of Drosophila orena (Fruit fly).